A 252-amino-acid chain; its full sequence is tRNA pseudouridine synthase A (252 aa).

Asp54 functions as the Nucleophile in the catalytic mechanism. Tyr112 contributes to the substrate binding site.

The protein belongs to the tRNA pseudouridine synthase TruA family. Homodimer.

The catalysed reaction is uridine(38/39/40) in tRNA = pseudouridine(38/39/40) in tRNA. Its function is as follows. Formation of pseudouridine at positions 38, 39 and 40 in the anticodon stem and loop of transfer RNAs. This chain is tRNA pseudouridine synthase A, found in Oenococcus oeni (strain ATCC BAA-331 / PSU-1).